The primary structure comprises 116 residues: Large ribosomal subunit protein bL19 (116 aa).

The protein belongs to the bacterial ribosomal protein bL19 family.

In terms of biological role, this protein is located at the 30S-50S ribosomal subunit interface and may play a role in the structure and function of the aminoacyl-tRNA binding site. This Blochmanniella pennsylvanica (strain BPEN) protein is Large ribosomal subunit protein bL19.